The chain runs to 335 residues: MSLAPEGRRLLRVEARNAEVPVERKPEWIKAKVHMGPEYIGLKNKVKSAGLHTVCEEAGCPNIFECWEDREATFLIGGDICTRRCDFCDITSGKPRPLDMEEPQKVAENIREMDLRYATVTGVARDDQKDGAAWLYAETIRRIHALNPGTGVEILPPDFGAVPELVQQVFDARPEVFAHNLETVPRIFKRIRPAFTYEKSLRVLTMAKADGLVTKSNLILGMGEEDHEIDQALVDLHESGCDIITITQYVRPSKLHHPIDRWVKPQEFVQWSQRAEEIGFQGVMAGPLVRSSYRAGKLYAQAMQRLGRTLPENLAHLAGEKTARQEASAVVAQMS.

Residues Cys-55, Cys-60, Cys-66, Cys-81, Cys-85, Cys-88, and Ser-292 each coordinate [4Fe-4S] cluster. The Radical SAM core domain occupies 67-281 (WEDREATFLI…SQRAEEIGFQ (215 aa)).

The protein belongs to the radical SAM superfamily. Lipoyl synthase family. Requires [4Fe-4S] cluster as cofactor.

The protein resides in the cytoplasm. The enzyme catalyses [[Fe-S] cluster scaffold protein carrying a second [4Fe-4S](2+) cluster] + N(6)-octanoyl-L-lysyl-[protein] + 2 oxidized [2Fe-2S]-[ferredoxin] + 2 S-adenosyl-L-methionine + 4 H(+) = [[Fe-S] cluster scaffold protein] + N(6)-[(R)-dihydrolipoyl]-L-lysyl-[protein] + 4 Fe(3+) + 2 hydrogen sulfide + 2 5'-deoxyadenosine + 2 L-methionine + 2 reduced [2Fe-2S]-[ferredoxin]. It participates in protein modification; protein lipoylation via endogenous pathway; protein N(6)-(lipoyl)lysine from octanoyl-[acyl-carrier-protein]: step 2/2. In terms of biological role, catalyzes the radical-mediated insertion of two sulfur atoms into the C-6 and C-8 positions of the octanoyl moiety bound to the lipoyl domains of lipoate-dependent enzymes, thereby converting the octanoylated domains into lipoylated derivatives. The polypeptide is Lipoyl synthase (Micrococcus luteus (strain ATCC 4698 / DSM 20030 / JCM 1464 / CCM 169 / CCUG 5858 / IAM 1056 / NBRC 3333 / NCIMB 9278 / NCTC 2665 / VKM Ac-2230) (Micrococcus lysodeikticus)).